The sequence spans 502 residues: Cytochrome P450 monooxygenase verC (502 aa).

Residues 9-29 (IAALPMVSLLGAALIVVSVLG) traverse the membrane as a helical segment. N-linked (GlcNAc...) asparagine glycosylation is found at N124, N190, N271, and N342. Residue C444 coordinates heme.

The protein belongs to the cytochrome P450 family. Heme is required as a cofactor.

Its subcellular location is the membrane. Its pathway is mycotoxin biosynthesis. Cytochrome P450 monooxygenase; part of the gene cluster that mediates the biosynthesis of 11'-deoxyverticillin A, one of the dimeric epipolythiodioxopiperazines (ETPs) from the verticillin family that act as mycotoxins. 11'-deoxyverticillin A is required for normal conidiation. The nonribosomal peptide synthetase verP is speculated to be responsible for condensation of amino acids to form the carbon skeleton of verticillin, whereas the cluster-specific tailoring enzymes are involved in further modifications leading to the production of 11'-deoxyverticillin A. This chain is Cytochrome P450 monooxygenase verC, found in Clonostachys rogersoniana.